The following is a 628-amino-acid chain: Growth hormone receptor (628 aa).

Positions 1–18 (MDLWQLLLTLAVVGSSNA) are cleaved as a signal peptide. The Extracellular portion of the chain corresponds to 19–266 (FVGREAVTVT…FTCEEEFQFP (248 aa)). N-linked (GlcNAc...) asparagine glycans are attached at residues Asn33, Asn40, and Asn46. Disulfide bonds link Cys56-Cys66 and Cys101-Cys112. Residue Asn115 is glycosylated (N-linked (GlcNAc...) asparagine). A disulfide bond links Cys126 and Cys140. A Fibronectin type-III domain is found at 151 to 254 (PPTGLNWTLM…EILYITLPQS (104 aa)). 3 N-linked (GlcNAc...) asparagine glycosylation sites follow: Asn156, Asn161, and Asn200. A WSXWS motif motif is present at residues 240–244 (YGEFS). Residues 267–287 (WFLIMIFGIFGLTVMLLVVMF) traverse the membrane as a helical segment. The Cytoplasmic portion of the chain corresponds to 288–628 (SKQQRIKMLI…STDQLNKIML (341 aa)). The tract at residues 294-379 (KMLILPPVPV…HQKSLNILGA (86 aa)) is required for JAK2 binding. The short motif at 297-305 (ILPPVPVPK) is the Box 1 motif element. Positions 340 to 349 (DSWVEFIELD) match the UbE motif motif. Residue Ser341 is modified to Phosphoserine. Tyr483 and Tyr585 each carry phosphotyrosine.

This sequence belongs to the type I cytokine receptor family. Type 1 subfamily. On growth hormone (GH) binding, forms homodimers and binds JAK2 via a box 1-containing domain. Post-translationally, the soluble form (GHBP) is produced by phorbol ester-promoted proteolytic cleavage at the cell surface (shedding) by ADAM17/TACE. Shedding is inhibited by growth hormone (GH) binding to the receptor probably due to a conformational change in GHR rendering the receptor inaccessible to ADAM17. On GH binding, phosphorylated on tyrosine residues in the cytoplasmic domain by JAK2. In terms of processing, ubiquitinated by the ECS(SOCS2) complex following ligand-binding and phosphorylation by JAK2, leading to its degradation by the proteasome. Regulation by the ECS(SOCS2) complex acts as a negative feedback loop of growth hormone receptor signaling. Ubiquitination is not sufficient for GHR internalization.

Its subcellular location is the cell membrane. The protein localises to the secreted. Functionally, receptor for pituitary gland growth hormone (GH1) involved in regulating postnatal body growth. On ligand binding, couples to the JAK2/STAT5 pathway. In terms of biological role, the soluble form (GHBP) acts as a reservoir of growth hormone in plasma and may be a modulator/inhibitor of GH signaling. The chain is Growth hormone receptor (GHR) from Cavia porcellus (Guinea pig).